The following is a 423-amino-acid chain: Osteomodulin (423 aa).

The signal sequence occupies residues 1 to 20 (MGCLRPIYVLFFCFVVRVYG). Tyrosine 22, tyrosine 25, tyrosine 31, tyrosine 39, tyrosine 51, and tyrosine 77 each carry sulfotyrosine. The LRRNT domain maps to 53-91 (APFYQNILGCAKECFCPTNFPTSMYCDNRKLKTIPDIPM). LRR repeat units lie at residues 92-113 (HIQQLNLQFNDIEAVTADSFIN), 116-129 (HLKEINLSHNKIKS), 142-164 (NLQQLHLDHNNLEEFPFPLPKSL), 165-184 (ERLLLGYNEISTLPTHAMDG), 187-207 (NVTMLDLCYNHLSDSTLKGKI), 213-233 (KLMQLNLCNNRLESMPPGLPL), 234-255 (SLMYLSLENNSISSIPEDYFQK), 258-279 (KLHALRISHNKLEDIPYDIFNL), 281-294 (NLIELNVGHNKLKQ), 301-322 (NLEHLYLQNNEIQSINVTMMCP), and 331-353 (HLTYLRVDQNKLKEPISSYIFFC). N-linked (GlcNAc...) asparagine glycosylation is found at asparagine 113 and asparagine 121. The N-linked (GlcNAc...) asparagine glycan is linked to asparagine 187. 2 N-linked (GlcNAc...) asparagine glycosylation sites follow: asparagine 242 and asparagine 278. Asparagine 316 is a glycosylation site (N-linked (GlcNAc...) asparagine). Cysteine 321 and cysteine 353 are disulfide-bonded. Residues 383 to 408 (YQDEEEEEEDDSQDHTLEGQEETEEH) form a disordered region. Positions 385-394 (DEEEEEEDDS) are enriched in acidic residues. 2 positions are modified to sulfotyrosine: tyrosine 413 and tyrosine 414.

This sequence belongs to the small leucine-rich proteoglycan (SLRP) family. SLRP class II subfamily. As to quaternary structure, binds the alpha(V)beta(3)-integrin. Glycosylated; contains keratan sulfate. As to expression, osteoblast and odontoblast. Expressed in femoral bone and calvaria tissues. Detected in femoral head, rib, tendon and bone marrow.

It is found in the secreted. Its subcellular location is the extracellular space. The protein resides in the extracellular matrix. Functionally, may be implicated in biomineralization processes. Has a function in binding of osteoblasts via the alpha(V)beta(3)-integrin. This Rattus norvegicus (Rat) protein is Osteomodulin (Omd).